The following is a 154-amino-acid chain: RING finger protein 11 (154 aa).

The segment covering 1 to 12 has biased composition (polar residues); it reads MGNCLKSPTSDD. Positions 1-52 are disordered; it reads MGNCLKSPTSDDISLLHESQSDRASFGEGTEPDQEPPPPYQEQVPVPIYHPT. G2 carries N-myristoyl glycine lipidation. C4 is lipidated: S-palmitoyl cysteine. Phosphoserine is present on residues S14 and S25. The short motif at 37–40 is the PPxY motif element; that stretch reads PPPY. The segment at 99-140 adopts an RING-type zinc-finger fold; it reads CVICMMDFVYGDPIRFLPCMHIYHLDCIDDWLMRSFTCPSCM. T135 bears the Phosphothreonine; by PKB/AKT1 mark.

In terms of assembly, interacts (when phosphorylated) with 14-3-3. Interacts with the E3 ubiquitin-ligases NEDD4, ITCH, SMURF2 and WWP1. Also interacts with the E2 ubiquitin-conjugating enzymes UBE2D1 and UBE2N, but neither with CDC34, nor with UBE2L3. Interacts with ZNF350, EPS15 and STAMBP. After TNF stimulation, interacts with TAX1BP1, TNFAIP3 and RIPK1; these interactions are transient and they are lost after 1 hour of stimulation with TNF. Interacts with GGA1. In terms of processing, ubiquitinated in the presence of ITCH, SMURF2 and UBE2D1, as well as WWP1. Post-translationally, phosphorylation by PKB/AKT1 may accelerate degradation by the proteasome. Acylation at both Gly-2 and Cys-4 is required for proper localization to the endosomes.

The protein localises to the early endosome. Its subcellular location is the recycling endosome. The protein resides in the cytoplasm. It is found in the nucleus. Essential component of a ubiquitin-editing protein complex, comprising also TNFAIP3, ITCH and TAX1BP1, that ensures the transient nature of inflammatory signaling pathways. Promotes the association of TNFAIP3 to RIPK1 after TNF stimulation. TNFAIP3 deubiquitinates 'Lys-63' polyubiquitin chains on RIPK1 and catalyzes the formation of 'Lys-48'-polyubiquitin chains. This leads to RIPK1 proteasomal degradation and consequently termination of the TNF- or LPS-mediated activation of NF-kappa-B. Recruits STAMBP to the E3 ubiquitin-ligase SMURF2 for ubiquitination, leading to its degradation by the 26S proteasome. The protein is RING finger protein 11 (Rnf11) of Mus musculus (Mouse).